Reading from the N-terminus, the 396-residue chain is Acetate kinase (396 aa).

N8 is a Mg(2+) binding site. ATP is bound at residue K15. R89 lines the substrate pocket. The active-site Proton donor/acceptor is D146. Residues 206 to 210 (HLGNG), 280 to 282 (DMR), and 328 to 332 (GVGEN) contribute to the ATP site. E382 is a Mg(2+) binding site.

It belongs to the acetokinase family. Homodimer. Mg(2+) is required as a cofactor. It depends on Mn(2+) as a cofactor.

The protein localises to the cytoplasm. It carries out the reaction acetate + ATP = acetyl phosphate + ADP. The protein operates within metabolic intermediate biosynthesis; acetyl-CoA biosynthesis; acetyl-CoA from acetate: step 1/2. Catalyzes the formation of acetyl phosphate from acetate and ATP. Can also catalyze the reverse reaction. The protein is Acetate kinase of Clavibacter sepedonicus (Clavibacter michiganensis subsp. sepedonicus).